We begin with the raw amino-acid sequence, 91 residues long: ATP synthase subunit c 1 (91 aa).

The next 2 membrane-spanning stretches (helical) occupy residues 4-24 (FTMC…GTAI) and 53-73 (IGLA…LIIL).

This sequence belongs to the ATPase C chain family. As to quaternary structure, F-type ATPases have 2 components, F(1) - the catalytic core - and F(0) - the membrane proton channel. F(1) has five subunits: alpha(3), beta(3), gamma(1), delta(1), epsilon(1). F(0) has three main subunits: a(1), b(2) and c(10-14). The alpha and beta chains form an alternating ring which encloses part of the gamma chain. F(1) is attached to F(0) by a central stalk formed by the gamma and epsilon chains, while a peripheral stalk is formed by the delta and b chains.

It is found in the cell inner membrane. In terms of biological role, f(1)F(0) ATP synthase produces ATP from ADP in the presence of a proton or sodium gradient. F-type ATPases consist of two structural domains, F(1) containing the extramembraneous catalytic core and F(0) containing the membrane proton channel, linked together by a central stalk and a peripheral stalk. During catalysis, ATP synthesis in the catalytic domain of F(1) is coupled via a rotary mechanism of the central stalk subunits to proton translocation. Key component of the F(0) channel; it plays a direct role in translocation across the membrane. A homomeric c-ring of between 10-14 subunits forms the central stalk rotor element with the F(1) delta and epsilon subunits. In Pelobacter propionicus (strain DSM 2379 / NBRC 103807 / OttBd1), this protein is ATP synthase subunit c 1.